The following is a 404-amino-acid chain: Adenylosuccinate synthetase (404 aa).

GTP contacts are provided by residues glycine 12–lysine 18 and glycine 40–threonine 42. Residue aspartate 13 is the Proton acceptor of the active site. Residues aspartate 13 and glycine 40 each coordinate Mg(2+). Residues aspartate 13–lysine 16, asparagine 38–histidine 41, threonine 121, arginine 135, glutamine 213, threonine 228, and arginine 296 contribute to the IMP site. The active-site Proton donor is the histidine 41. Threonine 292–arginine 298 contacts substrate. GTP contacts are provided by residues arginine 298, lysine 324 to aspartate 326, and serine 389 to glycine 391.

It belongs to the adenylosuccinate synthetase family. In terms of assembly, homodimer. It depends on Mg(2+) as a cofactor.

It is found in the cytoplasm. The catalysed reaction is IMP + L-aspartate + GTP = N(6)-(1,2-dicarboxyethyl)-AMP + GDP + phosphate + 2 H(+). It functions in the pathway purine metabolism; AMP biosynthesis via de novo pathway; AMP from IMP: step 1/2. Its function is as follows. Plays an important role in the de novo pathway of purine nucleotide biosynthesis. Catalyzes the first committed step in the biosynthesis of AMP from IMP. This Deinococcus geothermalis (strain DSM 11300 / CIP 105573 / AG-3a) protein is Adenylosuccinate synthetase.